Here is a 356-residue protein sequence, read N- to C-terminus: Histidinol-phosphate aminotransferase (356 aa).

The residue at position 213 (Lys213) is an N6-(pyridoxal phosphate)lysine.

Belongs to the class-II pyridoxal-phosphate-dependent aminotransferase family. Histidinol-phosphate aminotransferase subfamily. In terms of assembly, homodimer. Pyridoxal 5'-phosphate serves as cofactor.

It carries out the reaction L-histidinol phosphate + 2-oxoglutarate = 3-(imidazol-4-yl)-2-oxopropyl phosphate + L-glutamate. Its pathway is amino-acid biosynthesis; L-histidine biosynthesis; L-histidine from 5-phospho-alpha-D-ribose 1-diphosphate: step 7/9. This chain is Histidinol-phosphate aminotransferase, found in Clostridium novyi (strain NT).